The chain runs to 362 residues: Class I histocompatibility antigen, Gogo-B*0103 alpha chain (362 aa).

A signal peptide spans 1 to 24 (MRVTAPRTLLLLLSAALALTETWA). Residues 25–114 (GSHSMRYFDT…ALRYYNQSEA (90 aa)) form an alpha-1 region. Over 25–308 (GSHSMRYFDT…EPSSQSTIPI (284 aa)) the chain is Extracellular. Asn-110 carries N-linked (GlcNAc...) asparagine glycosylation. Residues 115–206 (GSHTIQWMYG…ENGRETLQRA (92 aa)) are alpha-2. Intrachain disulfides connect Cys-125–Cys-188 and Cys-227–Cys-283. The alpha-3 stretch occupies residues 207 to 298 (DTPKTHVTHH…GLPKPLTLRW (92 aa)). One can recognise an Ig-like C1-type domain in the interval 209–295 (PKTHVTHHPI…QHEGLPKPLT (87 aa)). The interval 299–308 (EPSSQSTIPI) is connecting peptide. A helical transmembrane segment spans residues 309-332 (VGIVAGLAVLAVVVIGAVVTAVIC). The Cytoplasmic segment spans residues 333–362 (RRKSSGGKGGSYSQAASSDSAQGSDVSLTA). The disordered stretch occupies residues 335-362 (KSSGGKGGSYSQAASSDSAQGSDVSLTA). Over residues 343–362 (SYSQAASSDSAQGSDVSLTA) the composition is skewed to low complexity.

This sequence belongs to the MHC class I family. As to quaternary structure, heterodimer of an alpha chain and a beta chain (beta-2-microglobulin).

The protein localises to the membrane. Involved in the presentation of foreign antigens to the immune system. This is Class I histocompatibility antigen, Gogo-B*0103 alpha chain from Gorilla gorilla gorilla (Western lowland gorilla).